A 332-amino-acid polypeptide reads, in one-letter code: Beta-chimaerin (332 aa).

A Phorbol-ester/DAG-type zinc finger spans residues 78–128 (THNFKVHTFRGPHWCEYCANFMWGLIAQGVRCSDCGLNVHKQCSKHVPNDC). A Rho-GAP domain is found at 141-332 (CDLTTLVKAH…ILIENEDVLF (192 aa)).

It localises to the membrane. With respect to regulation, in the inactive state, the N terminus protrudes into the active site of the Rho-GAP domain, sterically blocking Rac binding. Phospholipid binding to the Phorbol-ester/DAG-type zinc-finger/C1 domain triggers the cooperative dissociation of these interactions, allowing the N-terminus to move out of the active site and thereby activating the enzyme. Functionally, GTPase-activating protein for p21-rac. The protein is Beta-chimaerin (Chn2) of Mus musculus (Mouse).